Reading from the N-terminus, the 81-residue chain is Conotoxin Vc6.13 (81 aa).

An N-terminal signal peptide occupies residues 1 to 19; sequence MEKLTILLLVAAVLMSIQA. A propeptide spanning residues 20–44 is cleaved from the precursor; it reads LNQEQHQRAKINLLSKRKAPAERWW. 3 disulfide bridges follow: Cys-49/Cys-63, Cys-56/Cys-67, and Cys-62/Cys-72.

Belongs to the conotoxin O2 superfamily. As to expression, expressed by the venom duct.

The protein localises to the secreted. Functionally, inhibits voltage-gated ion channels. The polypeptide is Conotoxin Vc6.13 (Conus victoriae (Queen Victoria cone)).